The sequence spans 811 residues: Receptor-like protein 52 (811 aa).

An N-terminal signal peptide occupies residues 1–22 (MTFLPLLFIFFFLTSIPFPAFS). Residues 23 to 770 (QYNDRSTLLN…EDEEEVMNWT (748 aa)) are Extracellular-facing. 6 N-linked (GlcNAc...) asparagine glycosylation sites follow: asparagine 47, asparagine 64, asparagine 74, asparagine 93, asparagine 109, and asparagine 124. LRR repeat units follow at residues 62–86 (AGNVTEINFQNQNFTGTVPTTICNF), 87–110 (PNLKSLNLSFNYFAGEFPTVLYNC), 112–134 (KLQYLDLSQNLFNGSLPDDINRL), 135–159 (APKLKYLDLAANSFAGDIPKNIGRI), 161–183 (KLKVLNLYMSEYDGTFPSEIGDL), and 184–208 (SELEELQLALNDKFTPVKLPTEFGK). An LRR 7; degenerate repeat occupies 211 to 233 (KLKYMWLEEMNLIGEISAVVFEN). N-linked (GlcNAc...) asparagine glycans are attached at residues asparagine 233, asparagine 246, asparagine 260, asparagine 295, and asparagine 304. LRR repeat units follow at residues 234 to 258 (MTDLKHVDLSVNNLTGRIPDVLFGL), 260 to 281 (NLTELYLFANDLTGEIPKSISA), 282 to 305 (KNLVHLDLSANNLNGSIPESIGNL), 307 to 329 (NLELLYLFVNELTGEIPRAIGKL), 330 to 354 (PELKELKLFTNKLTGEIPAEIGFIS), 356 to 377 (LERFEVSENQLTGKLPENLCHG), 379 to 401 (KLQSVIVYSNNLTGEIPESLGDC), and 403 to 427 (TLSSVLLQNNGFSGSVTISNNTRSN). N-linked (GlcNAc...) asparagine glycosylation is found at asparagine 389, asparagine 422, asparagine 429, asparagine 455, asparagine 464, and asparagine 485. 10 LRR repeats span residues 441–465 (LHSLILLDLSTNKFNGSIPRCIANL), 466–489 (STLEVLNLGKNHLSGSIPENISTS), 491–511 (KSIDIGHNQLAGKLPRSLVRI), 512–537 (SSLEVLNVESNKINDTFPFWLDSMQQ), 539–557 (QVLVLRSNAFHGSINQNGF), 558–581 (SKLRIIDISGNHFNGTLPLDFFVN), 625–649 (LNTFTTIDFSGNKFEGEIPRSVGLL), 650–673 (KELHVLNLSNNGFTGHIPSSMGNL), 674–697 (IELESLDVSQNKLSGEIPPELGKL), and 699–722 (YLAYMNFSQNQFVGLVPGGTQFQT). Asparagine 525 carries N-linked (GlcNAc...) asparagine glycosylation. N-linked (GlcNAc...) asparagine glycosylation is found at asparagine 571 and asparagine 581. The N-linked (GlcNAc...) asparagine glycan is linked to asparagine 656. Residue asparagine 704 is glycosylated (N-linked (GlcNAc...) asparagine). The chain crosses the membrane as a helical span at residues 771–791 (AAAIGSIPGISIGLTMGYILV). Residues 792–811 (SYKPEWLMNSGRNKRRIKPI) are Cytoplasmic-facing.

This sequence belongs to the RLP family.

It localises to the cell membrane. Its function is as follows. Required for defense against powdery mildew pathogen. The polypeptide is Receptor-like protein 52 (Arabidopsis thaliana (Mouse-ear cress)).